A 538-amino-acid chain; its full sequence is tRNA-2-methylthio-N(6)-dimethylallyladenosine synthase (538 aa).

Residues 1–23 are disordered; that stretch reads MNEEQRLGRNGNTDAVSTKEAGS. An MTTase N-terminal domain is found at 95-213; that stretch reads KKFLVRTYGC…LPHLLRNALF (119 aa). Residues Cys-104, Cys-140, Cys-174, Cys-250, Cys-254, and Cys-257 each contribute to the [4Fe-4S] cluster site. Residues 236 to 466 enclose the Radical SAM core domain; sequence REGKTQAWVN…NALVNDISAQ (231 aa). Residues 469–532 form the TRAM domain; that stretch reads LEYQDKVVEV…TWSLNGEMVE (64 aa).

The protein belongs to the methylthiotransferase family. MiaB subfamily. As to quaternary structure, monomer. The cofactor is [4Fe-4S] cluster.

The protein localises to the cytoplasm. It catalyses the reaction N(6)-dimethylallyladenosine(37) in tRNA + (sulfur carrier)-SH + AH2 + 2 S-adenosyl-L-methionine = 2-methylsulfanyl-N(6)-dimethylallyladenosine(37) in tRNA + (sulfur carrier)-H + 5'-deoxyadenosine + L-methionine + A + S-adenosyl-L-homocysteine + 2 H(+). In terms of biological role, catalyzes the methylthiolation of N6-(dimethylallyl)adenosine (i(6)A), leading to the formation of 2-methylthio-N6-(dimethylallyl)adenosine (ms(2)i(6)A) at position 37 in tRNAs that read codons beginning with uridine. This Halalkalibacterium halodurans (strain ATCC BAA-125 / DSM 18197 / FERM 7344 / JCM 9153 / C-125) (Bacillus halodurans) protein is tRNA-2-methylthio-N(6)-dimethylallyladenosine synthase.